A 240-amino-acid chain; its full sequence is DISARM protein DrmC (240 aa).

Positions 174-201 (GYSSLHAKVIMVDEEKAFVSSANLSYNG) constitute a PLD phosphodiesterase domain. Catalysis depends on residues H179, K181, and D186.

This sequence belongs to the phospholipase D family.

Its subcellular location is the cytoplasm. Its function is as follows. Component of antiviral defense system DISARM (defense island system associated with restriction-modification), composed of DrmE, DrmA, DrmB, DrmC and DrmMII. DISARM is probably a multi-gene restriction module, this subunit is probably a phospholipase or nuclease. Expression of DISARM in B.subtilis (strain BEST7003) confers resistance to phages Nf, phi29, phi105, phi3T, SPO1, SPR and SPP1. Protection is over 10(7)-fold against phi3T, 10(4)-10(5)-fold against Nf, phi29, phi105 and SPR, 100-fold against SPO1 and 10-fold against SPP1. DISARM does not interfere with phage adsorption, but instead interferes with (phi3T) DNA replication early in its cycle, preventing replication, circularization and lysogeny and probably causes phage DNA degradation (DNA is degraded in SPP1-infected cells). The sequence is that of DISARM protein DrmC from Bacillus paralicheniformis (strain ATCC 9945a / NCIMB 11709 / CD-2).